Reading from the N-terminus, the 440-residue chain is Thymidine phosphorylase (440 aa).

Belongs to the thymidine/pyrimidine-nucleoside phosphorylase family. In terms of assembly, homodimer.

The catalysed reaction is thymidine + phosphate = 2-deoxy-alpha-D-ribose 1-phosphate + thymine. It participates in pyrimidine metabolism; dTMP biosynthesis via salvage pathway; dTMP from thymine: step 1/2. In terms of biological role, the enzymes which catalyze the reversible phosphorolysis of pyrimidine nucleosides are involved in the degradation of these compounds and in their utilization as carbon and energy sources, or in the rescue of pyrimidine bases for nucleotide synthesis. This chain is Thymidine phosphorylase, found in Salmonella choleraesuis (strain SC-B67).